The primary structure comprises 373 residues: Indole glucosinolate O-methyltransferase 4 (373 aa).

Residues Gly-217, Asp-240, Asp-260, Met-261, and Lys-274 each coordinate S-adenosyl-L-homocysteine. The active-site Proton acceptor is His-278.

Belongs to the class I-like SAM-binding methyltransferase superfamily. Cation-independent O-methyltransferase family. In terms of assembly, interacts with B'GAMMA.

It participates in secondary metabolite biosynthesis. Involved in indole glucosinolate biosynthesis. Catalyzes methoxylation reactions of the glucosinolate indole ring. Converts the hydroxy intermediates 4-hydroxy-indol-3-yl-methylglucosinolate (4OH-I3M) and 1-hydroxy-indol-3-yl-methylglucosinolate (1OH-I3M) to 4-methoxy-indol-3-yl-methylglucosinolate (4MO-I3M) and 1-methoxy-indol-3-yl-methylglucosinolate(1MO-I3M), respectively. This chain is Indole glucosinolate O-methyltransferase 4, found in Arabidopsis thaliana (Mouse-ear cress).